A 522-amino-acid polypeptide reads, in one-letter code: MEMEEAQEMSQMPGRDSPPPNDVSEENDEAMPIPEDLSASSNLQHNNRGDKEGLACNIKVEARCDEENGLAIDMMMNGEEEEECAEDLRVLDASGAKVNGSHAGGPDSKGPYSSAGGIRLPNGKLKCDICGIVCIGPNVLMVHKRSHTGERPFQCTQCGASFTQKGNLLRHIKLHSGEKPFKCHLCNYACRRRDALSGHLRTHSVGKPHKCAYCGRSYKQRSSLEEHKERCHNYLQCMGLQNSIYTVVKEESNQNEQREDLSQMGSKRALVLDRLANNVAKRKSTMPQKFVGEKRFSNISFEGGPGELMQPHVIDQAINSAINYLGAESLRPLIQTSPTSSDMGVMGSMYPLHKPPAEGHGLSAKDSAAENLLLLAKSKSASSEKDGSPSHSGQDSTDTESNNEEKAGVGASGLIYLTNHITSGVRNGVLPLVKEEQQRQYEAMRASIEIASEGFKVLSGEGEQVRAYRCEHCRILFLDHVMYTIHMGCHGFRDPFECNLCGHRSQDRYEFSSHMTRGEHRY.

Disordered regions lie at residues 1–48 (MEME…HNNR) and 96–115 (AKVN…YSSA). 4 C2H2-type zinc fingers span residues 125–147 (LKCD…KRSH), 153–175 (FQCT…IKLH), 181–203 (FKCH…LRTH), and 209–232 (HKCA…ERCH). Residues 379 to 406 (KSASSEKDGSPSHSGQDSTDTESNNEEK) are disordered. 2 C2H2-type zinc fingers span residues 468 to 490 (YRCE…MGCH) and 496 to 520 (FECN…RGEH).

This sequence belongs to the Ikaros C2H2-type zinc-finger protein family. As to expression, expression mainly limited to thymus, spleen and pronephros. Very low expression in liver. No expression in testis, brain, eye and muscle.

Its subcellular location is the nucleus. In terms of biological role, binds and activates the enhancer (delta-A element) of the CD3-delta gene. Functions in the specification and the maturation of the T-lymphocyte. Also interacts with a critical control element in the TDT (terminal deoxynucleotidyltransferase) promoter as well as with the promoters for other genes expressed during early stages of B- and T-cell development. Function is isoform-specific and is modulated by dominant-negative inactive isoforms. The protein is DNA-binding protein Ikaros (ikzf1) of Oncorhynchus mykiss (Rainbow trout).